A 232-amino-acid chain; its full sequence is Orotidine 5'-phosphate decarboxylase (232 aa).

Substrate-binding positions include Asp-12, Lys-34, 61–70 (DMKLLDIDNT), Thr-116, Arg-177, Gln-186, Gly-206, and Arg-207. The active-site Proton donor is the Lys-63.

This sequence belongs to the OMP decarboxylase family. Type 1 subfamily. In terms of assembly, homodimer.

The catalysed reaction is orotidine 5'-phosphate + H(+) = UMP + CO2. It functions in the pathway pyrimidine metabolism; UMP biosynthesis via de novo pathway; UMP from orotate: step 2/2. Catalyzes the decarboxylation of orotidine 5'-monophosphate (OMP) to uridine 5'-monophosphate (UMP). This Sinorhizobium medicae (strain WSM419) (Ensifer medicae) protein is Orotidine 5'-phosphate decarboxylase.